We begin with the raw amino-acid sequence, 320 residues long: Olfactory receptor 2W1 (320 aa).

Topologically, residues 1–25 (MDQSNYSSLHGFILLGFSNHPKMEM) are extracellular. Residue Asn5 is glycosylated (N-linked (GlcNAc...) asparagine). Residues 26-49 (ILSGVVAIFYLITLVGNTAIILAS) traverse the membrane as a helical segment. Residues 50–57 (LLDSQLHT) are Cytoplasmic-facing. Residues 58 to 79 (PMYFFLRNLSFLDLCFTTSIIP) form a helical membrane-spanning segment. Residues 80 to 100 (QMLVNLWGPDKTISYVGCIIQ) lie on the Extracellular side of the membrane. Cysteines 97 and 189 form a disulfide. The chain crosses the membrane as a helical span at residues 101-120 (LYVYMWLGSVECLLLAVMSY). Residues 121–139 (DRFTAICKPLHYFVVMNPH) lie on the Cytoplasmic side of the membrane. Residues 140–158 (LCLKMIIMIWSISLANSVV) form a helical membrane-spanning segment. Topologically, residues 159–195 (LCTLTLNLPTCGNNILDHFLCELPALVKIACVDTTTV) are extracellular. A helical membrane pass occupies residues 196 to 219 (EMSVFALGIIIVLTPLILILISYG). Over 220-236 (YIAKAVLRTKSKASQRK) the chain is Cytoplasmic. The helical transmembrane segment at 237-259 (AMNTCGSHLTVVSMFYGTIIYMY) threads the bilayer. Residues 260–272 (LQPGNRASKDQGK) are Extracellular-facing. A helical membrane pass occupies residues 273 to 292 (FLTLFYTVITPSLNPLIYTL). Residues 293-320 (RNKDMKDALKKLMRFHHKSTKIKRNCKS) lie on the Cytoplasmic side of the membrane.

This sequence belongs to the G-protein coupled receptor 1 family.

It localises to the cell membrane. In terms of biological role, odorant receptor. In Homo sapiens (Human), this protein is Olfactory receptor 2W1 (OR2W1).